The chain runs to 892 residues: MAFFSSSSSSFPVVFARMEEASSSTGSTGGAMAGIPVIPSTSAALLANTNLEPERIAVLQTQLQEYRQKQMDLIGHFQRAQQELSVQHMHNLYTALQQQQQLQSLQERSGINPMLISQTSEDATSGPAAPLSLANSLTNLLSSSNGNLSNLSVPQTPTKEHHPTLPPQQPSAPTSSRKSDLPRTNSTTISQLTKDRLKNMIANRSKGESNSQSNLMSNVNGHDNSRRLKNSNSQMNVSSPHFEPYRLPTSLANAHNLQQASEFQLRKVNSEPNLKMKIRAKLLSKGNSPVQHVQQTNNSQFSFTHPQLKRSDSETSNMPIDMLPSGSHSNIPHLMLPSPSLPNLAAATGAFQNLNLPIGQDLTAFMAVANLSPFLSLPSLLNKKLELGGMTDEGDRNGFSSSASNSSLASNASLGSHQYQSLLKQQIRDLVLRRKSLVREDPEGEGMAESYNGLFSHAKLQQLTALAMESGFNPKLEPTFSTGLGYDPLMARHECVCSNNSNHVENGERIQRIWSKLTEEGHVAKCERITAKKASLEQLQMVHSQTYTTFFAVSPTACLKIDANALPLKRFLQLPCGGIGIDSDTYFNDASTQIAARLAAGTLIELSSQVAEGRLKNGFACIRPPGHHAEAEQALGFCFFNNVAVTAKVLQAKYPVQCAKIAIIDWDVHHGNGTQLSFDDDPNVLYMSLHRHDNGNFFPGTGSVTEIGKGAGKGFSVNIPFSGGVMKDAEYLAAWRTVVEPVLASFCPDFILVSAGFDACHGHVNALGGYEITPEMFGYMTKCLLSYANGKVVLALEGGYNLDSISAAAEQCVQALIGESDDAGRLCTDSLENLPNQSALETLQKVIAIHKGFWPALHGQEAAINTTEMQWRNVKLQVQMQQQQQLQQQLQQ.

A disordered region spans residues Asn-145–Ser-225. Polar residues-rich tracts occupy residues Ser-171 to Leu-192 and Glu-208 to His-222. The histone deacetylase stretch occupies residues Ser-481 to Asp-822. His-628 is a catalytic residue.

This sequence belongs to the histone deacetylase family. HD type 2 subfamily.

It is found in the nucleus. The enzyme catalyses N(6)-acetyl-L-lysyl-[histone] + H2O = L-lysyl-[histone] + acetate. Its function is as follows. Responsible for the deacetylation of lysine residues on the N-terminal part of the core histones (H2A, H2B, H3 and H4). Histone deacetylation gives a tag for epigenetic repression and plays an important role in transcriptional regulation, cell cycle progression and developmental events. Histone deacetylases act via the formation of large multiprotein complexes. This Caenorhabditis briggsae protein is Histone deacetylase 4 (hda-4).